The chain runs to 236 residues: Eukaryotic translation initiation factor 3 subunit J (236 aa).

Residues Met-1–Ala-65 form a disordered region. Over residues Gly-28–Lys-46 the composition is skewed to acidic residues. Residues Asp-47–Ala-58 are compositionally biased toward basic and acidic residues.

It belongs to the eIF-3 subunit J family. Component of the eukaryotic translation initiation factor 3 (eIF-3) complex. The eIF-3 complex interacts with pix.

It localises to the cytoplasm. In terms of biological role, component of the eukaryotic translation initiation factor 3 (eIF-3) complex, which is involved in protein synthesis of a specialized repertoire of mRNAs and, together with other initiation factors, stimulates binding of mRNA and methionyl-tRNAi to the 40S ribosome. The eIF-3 complex specifically targets and initiates translation of a subset of mRNAs involved in cell proliferation. The protein is Eukaryotic translation initiation factor 3 subunit J of Drosophila melanogaster (Fruit fly).